Here is a 200-residue protein sequence, read N- to C-terminus: Endoribonuclease YbeY (200 aa).

A compositionally biased stretch (pro residues) spans 1 to 18; the sequence is MPADPALPDPVPPGPTAP. Positions 1–22 are disordered; the sequence is MPADPALPDPVPPGPTAPVPTD. Zn(2+) contacts are provided by H151, H155, and H161.

The protein belongs to the endoribonuclease YbeY family. It depends on Zn(2+) as a cofactor.

It is found in the cytoplasm. Functionally, single strand-specific metallo-endoribonuclease involved in late-stage 70S ribosome quality control and in maturation of the 3' terminus of the 16S rRNA. The polypeptide is Endoribonuclease YbeY (Rhodospirillum rubrum (strain ATCC 11170 / ATH 1.1.1 / DSM 467 / LMG 4362 / NCIMB 8255 / S1)).